Consider the following 416-residue polypeptide: S-adenosylmethionine synthase (416 aa).

Histidine 14 contributes to the ATP binding site. Aspartate 16 contacts Mg(2+). Glutamate 42 contributes to the K(+) binding site. Residues glutamate 55 and glutamine 98 each coordinate L-methionine. Residues 98-108 (QSPDIARGVDT) form a flexible loop region. Residues 173-175 (DGK), 249-250 (KF), aspartate 258, 264-265 (RK), alanine 281, and lysine 285 contribute to the ATP site. Residue aspartate 258 participates in L-methionine binding. Lysine 289 is an L-methionine binding site.

This sequence belongs to the AdoMet synthase family. As to quaternary structure, homotetramer; dimer of dimers. Requires Mg(2+) as cofactor. It depends on K(+) as a cofactor.

It localises to the cytoplasm. It carries out the reaction L-methionine + ATP + H2O = S-adenosyl-L-methionine + phosphate + diphosphate. The protein operates within amino-acid biosynthesis; S-adenosyl-L-methionine biosynthesis; S-adenosyl-L-methionine from L-methionine: step 1/1. Functionally, catalyzes the formation of S-adenosylmethionine (AdoMet) from methionine and ATP. The overall synthetic reaction is composed of two sequential steps, AdoMet formation and the subsequent tripolyphosphate hydrolysis which occurs prior to release of AdoMet from the enzyme. The protein is S-adenosylmethionine synthase of Thermosynechococcus vestitus (strain NIES-2133 / IAM M-273 / BP-1).